The chain runs to 417 residues: Serine hydroxymethyltransferase (417 aa).

Residues L121 and 125–127 (GHL) each bind (6S)-5,6,7,8-tetrahydrofolate. K229 carries the post-translational modification N6-(pyridoxal phosphate)lysine. Residue 355 to 357 (SPF) participates in (6S)-5,6,7,8-tetrahydrofolate binding.

Belongs to the SHMT family. In terms of assembly, homodimer. Pyridoxal 5'-phosphate serves as cofactor.

It localises to the cytoplasm. The enzyme catalyses (6R)-5,10-methylene-5,6,7,8-tetrahydrofolate + glycine + H2O = (6S)-5,6,7,8-tetrahydrofolate + L-serine. It functions in the pathway one-carbon metabolism; tetrahydrofolate interconversion. It participates in amino-acid biosynthesis; glycine biosynthesis; glycine from L-serine: step 1/1. Catalyzes the reversible interconversion of serine and glycine with tetrahydrofolate (THF) serving as the one-carbon carrier. This reaction serves as the major source of one-carbon groups required for the biosynthesis of purines, thymidylate, methionine, and other important biomolecules. Also exhibits THF-independent aldolase activity toward beta-hydroxyamino acids, producing glycine and aldehydes, via a retro-aldol mechanism. This chain is Serine hydroxymethyltransferase, found in Shewanella baltica (strain OS155 / ATCC BAA-1091).